A 136-amino-acid polypeptide reads, in one-letter code: Large ribosomal subunit protein bL20 (136 aa).

It belongs to the bacterial ribosomal protein bL20 family.

In terms of biological role, binds directly to 23S ribosomal RNA and is necessary for the in vitro assembly process of the 50S ribosomal subunit. It is not involved in the protein synthesizing functions of that subunit. In Tropheryma whipplei (strain TW08/27) (Whipple's bacillus), this protein is Large ribosomal subunit protein bL20.